The sequence spans 317 residues: 3',5'-bisphosphate nucleotidase (317 aa).

The active-site Proton acceptor is the Asp-46. Positions 69, 118, 120, and 121 each coordinate Mg(2+). The active-site Proton acceptor is the Thr-123. Thr-123 lines the adenosine 3',5'-bisphosphate pocket. AMP is bound by residues Ser-198, His-203, Ser-227, Lys-230, Arg-244, Tyr-251, and Asp-257. Adenosine 3',5'-bisphosphate contacts are provided by His-203, Ser-227, Lys-230, and Arg-244. Asp-257 contributes to the Mg(2+) binding site. Asp-257 is an adenosine 3',5'-bisphosphate binding site.

Belongs to the inositol monophosphatase superfamily. Monomer. It depends on Mg(2+) as a cofactor.

It is found in the cytoplasm. The enzyme catalyses adenosine 3',5'-bisphosphate + H2O = AMP + phosphate. It catalyses the reaction 1D-myo-inositol 1,4-bisphosphate + H2O = 1D-myo-inositol 4-phosphate + phosphate. With respect to regulation, inhibited by Li(2+). Functionally, phosphatase that converts 3'-phosphoadenosine 5'-phosphate (PAP) to AMP. Is also able to hydrolyze inositol 1,4-bisphosphate but with less efficiency. The protein is 3',5'-bisphosphate nucleotidase of Entamoeba histolytica (strain ATCC 30459 / HM-1:IMSS / ABRM).